A 357-amino-acid chain; its full sequence is Glutamyl endopeptidase (357 aa).

The first 29 residues, 1-29 (MKGKFLKVSSLFVATLTTATLVSSPAANA), serve as a signal peptide directing secretion. Positions 30–68 (LSSKAMDNHPQQTQTDKQQTPKIQKGGNLKPLEQRERAN) are excised as a propeptide. Positions 33 to 58 (KAMDNHPQQTQTDKQQTPKIQKGGNL) are disordered. A compositionally biased stretch (low complexity) spans 40-54 (QQTQTDKQQTPKIQK). Catalysis depends on charge relay system residues His119, Asp161, and Ser237. The tract at residues 282 to 357 (NFANDDHPNN…NNNSDNPDAA (76 aa)) is disordered. 18 tandem repeats follow at residues 289–291 (PNN), 292–294 (PDN), 295–297 (PDN), 298–300 (PNN), 301–303 (PDN), 304–306 (PNN), 307–309 (PDN), 310–312 (PNN), 313–315 (PDN), 316–318 (PDN), 319–321 (PNN), 322–324 (PDN), 325–327 (PNN), 328–330 (PDN), 331–333 (PNN), 337–339 (PNN), 340–342 (PNN), and 343–345 (PDN). Residues 289–345 (PNNPDNPDNPNNPDNPNNPDNPNNPDNPDNPNNPDNPNNPDNPNNPDQPNNPNNPDN) form an 18 X 3 AA repeats of P-[DN]-N region. Over residues 291-357 (NPDNPDNPNN…NNNSDNPDAA (67 aa)) the composition is skewed to low complexity.

The protein belongs to the peptidase S1B family. Proteolytically cleaved by aureolysin (aur). This cleavage leads to the activation of SspA.

It is found in the secreted. It carries out the reaction Preferential cleavage: Glu-|-Xaa, Asp-|-Xaa.. Its function is as follows. Preferentially cleaves peptide bonds on the carboxyl-terminal side of aspartate and glutamate. Along with other extracellular proteases it is involved in colonization and infection of human tissues. Required for proteolytic maturation of thiol protease SspB and inactivation of SspC, an inhibitor of SspB. It is the most important protease for degradation of fibronectin-binding protein (FnBP) and surface protein A, which are involved in adherence to host cells. May also protect bacteria against host defense mechanism by cleaving the immunoglobulin classes IgG, IgA and IgM. May be involved in the stability of secreted lipases. The chain is Glutamyl endopeptidase (sspA) from Staphylococcus aureus (strain MRSA252).